The sequence spans 411 residues: uncharacterized protein (411 aa).

Residues 20 to 199 (FLYFDFDAFF…LPITEIPGIG (180 aa)) enclose the UmuC domain.

The protein belongs to the DNA polymerase type-Y family.

This is an uncharacterized protein from Mycoplasma genitalium (strain ATCC 33530 / DSM 19775 / NCTC 10195 / G37) (Mycoplasmoides genitalium).